Reading from the N-terminus, the 470-residue chain is Uronate isomerase (470 aa).

The protein belongs to the metallo-dependent hydrolases superfamily. Uronate isomerase family.

It catalyses the reaction D-glucuronate = D-fructuronate. The enzyme catalyses aldehydo-D-galacturonate = keto-D-tagaturonate. It functions in the pathway carbohydrate metabolism; pentose and glucuronate interconversion. This chain is Uronate isomerase, found in Vibrio vulnificus (strain YJ016).